Consider the following 97-residue polypeptide: MLKMNLANLQLFAHKKGGGSTSNGRDSESKRLGAKAADGQTVTGGSILYRQRGTHIYPGANVGRGGDDTLFAKVEGVVRFERKGRDKKQVSVYPIAK.

The propeptide occupies methionine 1–phenylalanine 12. Residues histidine 14 to aspartate 38 form a disordered region.

Belongs to the bacterial ribosomal protein bL27 family. Post-translationally, the N-terminus is cleaved by ribosomal processing cysteine protease Prp.

This chain is Large ribosomal subunit protein bL27, found in Streptococcus mutans serotype c (strain ATCC 700610 / UA159).